The chain runs to 876 residues: uncharacterized protein (876 aa).

Basic and acidic residues predominate over residues 37 to 48 (DEDKSNNDDRRS). Disordered regions lie at residues 37–67 (DEDK…KGSN), 112–155 (DESG…RNIK), 226–254 (KKKS…TKSQ), and 330–353 (MMMD…SRSI). Residues S48 and S51 each carry the phosphoserine modification. Over residues 49-58 (LASILDSSSS) the composition is skewed to low complexity. Polar residues predominate over residues 115–131 (GFTSDNNADYFSGNSYS). A phosphoserine mark is found at S360, S510, S552, and S577. Residues 490–513 (PEVTKQKNTSGPKPGFSHSKSADA) are disordered. Disordered stretches follow at residues 661-728 (ITGG…RSPQ) and 750-876 (RHSL…FGRL). Over residues 689-699 (SKSKSRSSSKS) the composition is skewed to basic residues. A compositionally biased stretch (low complexity) spans 717 to 726 (SSASASRSRS). S775 bears the Phosphoserine mark. Composition is skewed to low complexity over residues 794–808 (NKDS…SSSL) and 842–854 (FSFF…SPSS).

This is an uncharacterized protein from Saccharomyces cerevisiae (strain ATCC 204508 / S288c) (Baker's yeast).